A 1036-amino-acid chain; its full sequence is Protein translocase subunit SecA, chloroplastic (1036 aa).

The N-terminal 76 residues, 1-76, are a transit peptide targeting the chloroplast; that stretch reads MESCARSASQ…KIGELMQVRA (76 aa). 186–193 is an ATP binding site; that stretch reads MRTGEGKT. The disordered stretch occupies residues 995 to 1036; sequence NQEQQQKGKPDSSNVENKRIGDANLNPVSVTESPSSDSPQNT. The span at 1000 to 1015 shows a compositional bias: basic and acidic residues; that stretch reads QKGKPDSSNVENKRIG. Polar residues predominate over residues 1020–1036; it reads NPVSVTESPSSDSPQNT.

This sequence belongs to the SecA family.

Its subcellular location is the plastid. It localises to the chloroplast stroma. The protein localises to the chloroplast thylakoid membrane. The catalysed reaction is ATP + H2O + chloroplast-proteinSide 1 = ADP + phosphate + chloroplast-proteinSide 2.. Functionally, has a central role in coupling the hydrolysis of ATP to the transfer of proteins across the thylakoid membrane. The protein is Protein translocase subunit SecA, chloroplastic of Spinacia oleracea (Spinach).